Consider the following 471-residue polypeptide: Transcription initiation factor TFIID subunit 7-like (471 aa).

Disordered regions lie at residues 1–84 (MERG…RQGT), 192–211 (SPEG…TGPT), and 328–377 (EMMG…EELE). The residue at position 199 (Ser199) is a Phosphoserine. Acidic residues predominate over residues 347–377 (GDDDDDEDEDDEDYGNEKEEEETDNSEEELE). Positions 358 to 433 (EDYGNEKEEE…QKELLRKVEN (76 aa)) form a coiled coil.

This sequence belongs to the TAF7 family. TFIID is composed of TATA binding protein (TBP) and a number of TBP-associated factors (TAFs). TAF7L may replace TAF7 in a spermatogenesis-specific form of TFIID. Interacts with TBP; the interaction occurs in a sub-population of cells (pachytene and haploid round spermatids) and is developmentally regulated through differential intracellular localization of the two proteins. Interacts with TAF1. As to expression, testis-specific (at protein level). Expressed during spermatogenesis from spermatogonia stage up to the stage of round spermatids.

It localises to the nucleus. Its subcellular location is the cytoplasm. In terms of biological role, probably functions as a spermatogenesis-specific component of the DNA-binding general transcription factor complex TFIID, a multimeric protein complex that plays a central role in mediating promoter responses to various activators and repressors. May play a role in spermatogenesis. The polypeptide is Transcription initiation factor TFIID subunit 7-like (Taf7l) (Mus musculus (Mouse)).